The chain runs to 527 residues: Amine oxidase [flavin-containing] A (527 aa).

Met-1 carries the N-acetylmethionine modification. The Cytoplasmic portion of the chain corresponds to 1–497 (MERQEKANNA…RTFWERNLPS (497 aa)). Position 383 is a phosphoserine (Ser-383). Cys-406 is modified (S-8alpha-FAD cysteine). The chain crosses the membrane as a helical; Anchor for type IV membrane protein span at residues 498-518 (VTGLLKIIGFSTSVTALWLAV). Over 519 to 527 (YKFRLLTRS) the chain is Mitochondrial intermembrane. The interaction with membrane phospholipid headgroups stretch occupies residues 520-522 (KFR).

This sequence belongs to the flavin monoamine oxidase family. Monomer, homo- or heterodimer (containing two subunits of similar size). Each subunit contains a covalently bound flavin. Enzymatically active as monomer. FAD is required as a cofactor.

The protein localises to the mitochondrion outer membrane. It catalyses the reaction a secondary aliphatic amine + O2 + H2O = a primary amine + an aldehyde + H2O2. The enzyme catalyses a primary methyl amine + O2 + H2O = an aldehyde + H2O2 + NH4(+). The catalysed reaction is (R)-adrenaline + O2 + H2O = (R)-3,4-dihydroxymandelaldehyde + methylamine + H2O2. It carries out the reaction dopamine + O2 + H2O = 3,4-dihydroxyphenylacetaldehyde + H2O2 + NH4(+). It catalyses the reaction tyramine + O2 + H2O = (4-hydroxyphenyl)acetaldehyde + H2O2 + NH4(+). The enzyme catalyses (R)-noradrenaline + O2 + H2O = (R)-3,4-dihydroxymandelaldehyde + H2O2 + NH4(+). The catalysed reaction is serotonin + O2 + H2O = (5-hydroxyindol-3-yl)acetaldehyde + H2O2 + NH4(+). It carries out the reaction kynuramine + O2 + H2O = 3-(2-aminophenyl)-3-oxopropanal + H2O2 + NH4(+). It catalyses the reaction tryptamine + O2 + H2O = indole-3-acetaldehyde + H2O2 + NH4(+). The enzyme catalyses 2-phenylethylamine + O2 + H2O = 2-phenylacetaldehyde + H2O2 + NH4(+). In terms of biological role, catalyzes the oxidative deamination of primary and some secondary amine such as neurotransmitters, with concomitant reduction of oxygen to hydrogen peroxide and has important functions in the metabolism of neuroactive and vasoactive amines in the central nervous system and peripheral tissues. Preferentially oxidizes serotonin. Also catalyzes the oxidative deamination of kynuramine to 3-(2-aminophenyl)-3-oxopropanal that can spontaneously condense to 4-hydroxyquinoline. The protein is Amine oxidase [flavin-containing] A of Sus scrofa (Pig).